A 682-amino-acid polypeptide reads, in one-letter code: MAPQKYSAQVMNSKANGAVYPSSGVSSLKKPKIEQLQADHELFLQAFEKPTQIYRFLRTRNLITPVLLHRTLTFMSHRNSRTNAKRKSFKVDDLLSSVEKMKGEPESPSLTSHLQLTFTGFFHKNVKPCQNSENEQNSVSLEVLLVKVCHKKRKDVSCPIKQVPTGKKQVPLNPDLSQTKPGAFPSLLVSSNEFEPSNSHMVKSYSLLFRVSHTGKRDPNGFISCEADENIDVKDEIPPRRKRNSSLRGDGETTETFVAQMTVFDKNRRLQLLDGEYEVSMQQIEDCPVSKKRATWETILDGKRLPPFETFSQGPTLQFTLRWTADPSDPSTAPVAKPLSTRNSDTSTTESRISTLRPAPVAVKESVSTSMQSRIEHSPCEPRQKLRIFYQFLYNNNTRQQTEARDDLHCPWCTLNCRKLYSLLKHLKLSHSRFIFNYVPHPKGARIDVSINECYDGSYVGNPQDIHSQPGFAFSRNGPVKRTAVTHILVCRPKRTKPSLSEFLESEDGEPEQQRTYVSGHNRLYFHSDSCMPLRPQEMEVDSEDERDPEWLQEKTTTQIEEFTDVNEGEKEVMKLWNLHVMKNGFIADNQMSQASMLFVEICGPHIIRRNLCRNFLLHLVNLHDFNLVTIATIDQAMARLKEIEESFPELEAGQESLDATCNGHSLSLGFSLHGKCTKLES.

A disordered region spans residues 326–355; it reads DPSDPSTAPVAKPLSTRNSDTSTTESRIST. Over residues 340-354 the composition is skewed to polar residues; that stretch reads STRNSDTSTTESRIS. A C2H2-type zinc finger spans residues 408-431; sequence LHCPWCTLNCRKLYSLLKHLKLSH. The interval 523 to 599 is VEFS-box; that stretch reads RLYFHSDSCM…NQMSQASMLF (77 aa).

Belongs to the VEFS (VRN2-EMF2-FIS2-SU(Z)12) family. As to quaternary structure, component of the prc2/eed-ezh2 complex.

It is found in the nucleus. Polycomb group (PcG) protein. Component of the prc2/eed-ezh2 complex, which methylates 'Lys-9' and 'Lys-27' of histone H3, leading to transcriptional repression of the affected target gene. In Danio rerio (Zebrafish), this protein is Polycomb protein suz12-B (suz12b).